A 437-amino-acid chain; its full sequence is Transcription factor E2F2 (437 aa).

The segment at 65 to 105 (ATPHGPEGQVVRCLPAGRLPAKRKLDLEGIGRPVVPEFPTP) is cyclin A/CDK2 binding. A DNA-binding region spans residues 107–196 (GKCIRVDGLP…KNNIQWVGRG (90 aa)). Positions 155 to 176 (LNWAAEVLDVQKRRIYDITNVL) are leucine-zipper. The DEF box motif lies at 160–196 (EVLDVQKRRIYDITNVLEGIQLIRKKAKNNIQWVGRG). Residues 197–289 (MFEDPTRPGK…PDRTEDNLQI (93 aa)) are dimerization. The disordered stretch occupies residues 307–368 (VQEPDSPSEE…APPPPSLVPL (62 aa)). Positions 315–330 (EEPLPSTSTLCPSPDS) are enriched in low complexity. Residues 351 to 365 (APAPTPQQAPPPPSL) show a composition bias toward pro residues. The interval 359 to 437 (APPPPSLVPL…SYDLGDLLIN (79 aa)) is transactivation. The retinoblastoma protein binding stretch occupies residues 410-427 (DDYLWGLEAGEGISDLFD).

The protein belongs to the E2F/DP family. In terms of assembly, component of the DRTF1/E2F transcription factor complex. Forms heterodimers with DP family members. The E2F2 complex binds specifically hypophosphorylated retinoblastoma protein RB1. During the cell cycle, RB1 becomes phosphorylated in mid-to-late G1 phase, detaches from the DRTF1/E2F complex, rendering E2F transcriptionally active. Viral oncoproteins, notably E1A, T-antigen and HPV E7, are capable of sequestering RB1, thus releasing the active complex. Binds EAPP. Post-translationally, phosphorylated by CDK2 and cyclin A-CDK2 in the S-phase. Highest level of expression is found in placenta, low levels are found in lung. Found as well in many immortalized cell lines derived from tumor samples.

The protein resides in the nucleus. In terms of biological role, transcription activator that binds DNA cooperatively with DP proteins through the E2 recognition site, 5'-TTTC[CG]CGC-3' found in the promoter region of a number of genes whose products are involved in cell cycle regulation or in DNA replication. The DRTF1/E2F complex functions in the control of cell-cycle progression from g1 to s phase. E2F2 binds specifically to RB1 in a cell-cycle dependent manner. The chain is Transcription factor E2F2 (E2F2) from Homo sapiens (Human).